The sequence spans 40 residues: Dolichyl-diphosphooligosaccharide--protein glycosyltransferase subunit 4 (40 aa).

The Lumenal segment spans residues 1–4 (MITD). The helical transmembrane segment at 5 to 25 (VQLAIFSNVLGVFLFLLVVAY) threads the bilayer. At 26–40 (HYINANTGKIGPKAK) the chain is on the cytoplasmic side.

This sequence belongs to the OST4 family. Component of the oligosaccharyltransferase (OST) complex.

It localises to the endoplasmic reticulum membrane. Its function is as follows. Subunit of the oligosaccharyl transferase (OST) complex that catalyzes the initial transfer of a defined glycan (Glc(3)Man(9)GlcNAc(2) in eukaryotes) from the lipid carrier dolichol-pyrophosphate to an asparagine residue within an Asn-X-Ser/Thr consensus motif in nascent polypeptide chains, the first step in protein N-glycosylation. N-glycosylation occurs cotranslationally and the complex associates with the Sec61 complex at the channel-forming translocon complex that mediates protein translocation across the endoplasmic reticulum (ER). All subunits are required for a maximal enzyme activity. This Drosophila willistoni (Fruit fly) protein is Dolichyl-diphosphooligosaccharide--protein glycosyltransferase subunit 4.